Reading from the N-terminus, the 234-residue chain is MKFTPELESGVLIKRYKRFLADIMLPNGQEITIHCPNTGSMKNCLFPGEKVWFSTSDNPKRKYAHTWELMQTDQQHYIGINTGRANALAEEAINRQVITELLGYEHLKREVKYGSENSRIDILLTSQNRPECYIEVKSCTLLEDQMGYFPDAVTTRGQKHLRELIHMVELGHRAVLLFVVQHSAITSVKPARHIDPHYADLLEQAVANGVEVLAYKTALSPQGSLITSACKVML.

The protein belongs to the SfsA family.

In Shewanella frigidimarina (strain NCIMB 400), this protein is Sugar fermentation stimulation protein homolog.